The primary structure comprises 257 residues: Baramicin A1 (257 aa).

A signal peptide spans 1–19; the sequence is MKSFGLIALAICGVICVAA. Residues 20–21 constitute a propeptide that is removed on maturation; it reads EP. Q22 is subject to Pyrrolidone carboxylic acid. Positions 95-122 are disordered; sequence GPNFSAKNLGPNGAKSVGIPQRARRSPQ. A glycan (N-linked (GlcNAc...) asparagine) is linked at N97. A propeptide spanning residues 118–121 is cleaved from the precursor; it reads RRSP. Pyrrolidone carboxylic acid is present on Q122. A propeptide spanning residues 145–148 is cleaved from the precursor; the sequence is RRSP. The residue at position 149 (Q149) is a Pyrrolidone carboxylic acid. Residues 172–175 constitute a propeptide that is removed on maturation; it reads RRSP. The residue at position 176 (Q176) is a Pyrrolidone carboxylic acid. Positions 199 to 204 are excised as a propeptide; the sequence is RRGIND. Residue N225 is glycosylated (N-linked (GlcNAc...) asparagine).

Post-translationally, proteolytically cleaved. As to expression, hemolymph (at protein level).

Its subcellular location is the secreted. In terms of biological role, secreted immune-induced peptides induced by Toll signaling. Has a significant role in resistance to infection by the entomopathogenic fungus B.bassiana R444 and weak antifungal activity against M.rileyi PHP1705. In adult males, activity appears to be important for neuromuscular processes that mediate correct wing posture upon Toll activation. This is Baramicin A1 from Drosophila melanogaster (Fruit fly).